The sequence spans 324 residues: Antihemorrhagic factor jMSF (324 aa).

The N-terminal stretch at 1–19 (MHFLVALVLLGQIIGSTLS) is a signal peptide. Cystatin fetuin-A-type domains lie at 22-130 (VRGD…VKCH) and 141-254 (RNCP…SDCV). Residues 23–25 (RGD) carry the Cell attachment site motif. 7 cysteine pairs are disulfide-bonded: cysteine 28-cysteine 315, cysteine 85-cysteine 96, cysteine 110-cysteine 129, cysteine 143-cysteine 146, cysteine 205-cysteine 217, cysteine 230-cysteine 253, and cysteine 287-cysteine 291. N-linked (GlcNAc...) asparagine glycosylation occurs at asparagine 204. Asparagine 282 carries an N-linked (GlcNAc...) asparagine glycan.

In terms of assembly, homodimer. In terms of tissue distribution, expressed by the liver.

Its subcellular location is the secreted. Functionally, suppress hemorrhage induced by metalloproteinases from the same venom (brevilysin-H3, -H4, -H6) and from habu venom (weak inhibition of the metalloproteinases HR2A). The non-hemorrhagic brevilysin-H2 is strongly inhibited by jMSF, whereas the brevilysin-L6 is not inhibited. Does not inhibit serine and cysteine proteases such as trypsin, chymotrypsin, thermolysin, and papain. The inhibition may occur by formation of a non-covalent complex between this protein and the proteinases at their metalloproteinase domains. This Gloydius blomhoffii (Mamushi) protein is Antihemorrhagic factor jMSF.